A 580-amino-acid polypeptide reads, in one-letter code: Serine/threonine-protein kinase srk1 (580 aa).

Residues 51–61 show a composition bias toward polar residues; the sequence is VADSTQNPTSK. The disordered stretch occupies residues 51–91; that stretch reads VADSTQNPTSKPKSRHAHFHETVHENPSEYSRSKCKQPTNE. In terms of domain architecture, Protein kinase spans 124–421; sequence YTLLQKMGDG…IHQFLAHPWI (298 aa). Residues 130-138 and Lys153 contribute to the ATP site; that span reads MGDGAFSNV. Residue Asp257 is the Proton acceptor of the active site. The disordered stretch occupies residues 530–580; it reads NLSGENDPSLASRQPAQSQQQSSQRSRNKFKGFQLNLSKATLYNRRHRQKV. Residues 537 to 554 show a composition bias toward low complexity; sequence PSLASRQPAQSQQQSSQR.

This sequence belongs to the protein kinase superfamily. CAMK Ser/Thr protein kinase family. CaMK subfamily. Mg(2+) is required as a cofactor. Post-translationally, phosphorylated by sty1.

Its subcellular location is the cytoplasm. It localises to the nucleus. The protein resides in the nucleolus. The protein localises to the spore core. It carries out the reaction L-seryl-[protein] + ATP = O-phospho-L-seryl-[protein] + ADP + H(+). The catalysed reaction is L-threonyl-[protein] + ATP = O-phospho-L-threonyl-[protein] + ADP + H(+). Delays the mitotic G2/M transition by promoting nuclear exclusion of cdc25. During osmotic stress, inhibits the G2/M transition in a sty1 stress-activated MAPK pathway-dependent manner. This chain is Serine/threonine-protein kinase srk1, found in Schizosaccharomyces pombe (strain 972 / ATCC 24843) (Fission yeast).